The sequence spans 181 residues: ADP-ribosylation factor 1 (181 aa).

The N-myristoyl glycine moiety is linked to residue glycine 2. GTP contacts are provided by residues 24–31 (GLDAAGKT), 67–71 (DVGGQ), and 126–129 (NKQD).

Belongs to the small GTPase superfamily. Arf family. As to quaternary structure, interacts with AGD7 and GDAP1. GDP-locked form interacts with cytosolic tail of p24 proteins. Interacts with AGD5 at trans-Golgi network. Interacts with A.tumefaciens AK6b.

The protein resides in the golgi apparatus. It is found in the endosome. It localises to the trans-Golgi network. The protein localises to the early endosome. The enzyme catalyses GTP + H2O = GDP + phosphate + H(+). Its activity is regulated as follows. Activated by AGD7 and AGD10. GTP-binding protein involved in protein trafficking; required for the sequence-specific vacuolar sorting route to the lytic vacuole, for the ER-to-Golgi transport and for the Golgi-derived transport to the plasma membrane. Involved in the recruitment of COPI and GDAP1 to membranes. Required for recycling of PIN auxin transporters (e.g. PIN1 and PIN2) in a fungal toxin brefeldin A (BFA)-dependent manner. Involved in various auxin-dependent developmental processes. This Arabidopsis thaliana (Mouse-ear cress) protein is ADP-ribosylation factor 1.